Consider the following 103-residue polypeptide: UPF0134 protein MPN_484 (103 aa).

The protein belongs to the UPF0134 family.

The polypeptide is UPF0134 protein MPN_484 (Mycoplasma pneumoniae (strain ATCC 29342 / M129 / Subtype 1) (Mycoplasmoides pneumoniae)).